The sequence spans 352 residues: MNAPIDERDFLTDSYDYALPERCIAQQPAEPRDHSRLLVVDGEAHTHRYFYDLPGLLRPGDLLVLNDTRVIPARLFGSKASGGRVEVLLLEPRAPREWLCLVKPARRLAVGARIDFDGVLAARVTELDAETGGRWLRFEGEEDFEAALERVGHTPLPPYLKTGRTRDERYQTLWASRPGAVAAPTAGLHFSGELLARLAERGIERATVTLHVGLGTFRPVQSVSVHTHRMHREWYEIPEATAIAIERTRSRGGRVLAVGTTSARALESAAQPNGLPATGPGRSELFVYPGYRWRVVEGLITNFHLPRSSLLMLVSSLVGRERLLALYREAVDKGYRFYSFGDAMLILPGAGA.

This sequence belongs to the QueA family. Monomer.

It is found in the cytoplasm. The catalysed reaction is 7-aminomethyl-7-carbaguanosine(34) in tRNA + S-adenosyl-L-methionine = epoxyqueuosine(34) in tRNA + adenine + L-methionine + 2 H(+). It functions in the pathway tRNA modification; tRNA-queuosine biosynthesis. Its function is as follows. Transfers and isomerizes the ribose moiety from AdoMet to the 7-aminomethyl group of 7-deazaguanine (preQ1-tRNA) to give epoxyqueuosine (oQ-tRNA). The sequence is that of S-adenosylmethionine:tRNA ribosyltransferase-isomerase from Gloeobacter violaceus (strain ATCC 29082 / PCC 7421).